Consider the following 469-residue polypeptide: Zinc transporter SLC39A7 (469 aa).

A helical membrane pass occupies residues 10–30; that stretch reads WVAVGLLTWATLGLLVAGLGG. 2 stretches are compositionally biased toward basic and acidic residues: residues 42–56 and 66–114; these read FHGHSHRHSHEDFHH and HTHE…EHSH. The interval 42–121 is disordered; the sequence is FHGHSHRHSH…HSHGGYGESG (80 aa). His66 carries the pros-methylhistidine modification. The next 3 membrane-spanning stretches (helical) occupy residues 138–158, 169–189, and 214–234; these read ALGATVLISAAPFFVLFLIPV, LQILLSFASGGLLGDAFLHLI, and GPILSVGLWVLSGIVAFLVVE. Positions 242-263 are enriched in basic residues; it reads GGHGHSHGHGHAHSHTRGSHGH. The disordered stretch occupies residues 242–310; the sequence is GGHGHSHGHG…VRPQNAEEEK (69 aa). Over residues 264 to 285 the composition is skewed to basic and acidic residues; sequence GRQERSTKEKQSSEEEEKETRG. Phosphoserine; by CK2 is present on residues Ser275 and Ser276. The next 2 membrane-spanning stretches (helical) occupy residues 381 to 401 and 417 to 436; these read MRLQLLTAVGALAGTACALLT and GWVLPFTAGGFIYVATVSVL.

Belongs to the ZIP transporter (TC 2.A.5) family. KE4/Catsup subfamily. In terms of assembly, homodimer. Post-translationally, rapidly phosphorylated by CK2 following Zn(2+) treatment. This phosphorylation is required for efficient cytosolic Zn(2+) release. Methylation at some His residue by METTL9 leads to reduced zinc-binding. As to expression, widely expressed.

Its subcellular location is the endoplasmic reticulum membrane. The protein resides in the golgi apparatus. It is found in the cis-Golgi network membrane. The enzyme catalyses Zn(2+)(in) = Zn(2+)(out). Its activity is regulated as follows. Phosphorylation activates zinc transport activity. In terms of biological role, transports Zn(2+) from the endoplasmic reticulum (ER)/Golgi apparatus to the cytosol, playing an essential role in the regulation of cytosolic zinc levels. Acts as a gatekeeper of zinc release from intracellular stores, requiring post-translational activation by phosphorylation, resulting in activation of multiple downstream pathways leading to cell growth and proliferation. Has an essential role in B cell development and is required for proper B cell receptor signaling. Plays an important role in maintaining intestinal epithelial homeostasis and skin dermis development by regulating ER function. Controls cell signaling pathways involved in glucose metabolism in skeletal muscle. Has a protective role against ER stress in different biological contexts. Mediates Zn(2+)-induced ferroptosis. The sequence is that of Zinc transporter SLC39A7 (SLC39A7) from Homo sapiens (Human).